The following is a 726-amino-acid chain: Catalase-peroxidase (726 aa).

The N-terminal stretch at 1–16 (MDNPTDSAGKCPVAHG) is a signal peptide. Positions 1–26 (MDNPTDSAGKCPVAHGNTPRSRSNRD) are disordered. The segment at residues 96 to 218 (WHSAGTYRIT…LGAVQMGLIY (123 aa)) is a cross-link (tryptophyl-tyrosyl-methioninium (Trp-Tyr) (with M-244)). His-97 serves as the catalytic Proton acceptor. The segment at residues 218–244 (YVNPEGPNGTPDPLASARDIRETFARM) is a cross-link (tryptophyl-tyrosyl-methioninium (Tyr-Met) (with W-96)). A heme b-binding site is contributed by His-259.

Belongs to the peroxidase family. Peroxidase/catalase subfamily. In terms of assembly, homodimer or homotetramer. It depends on heme b as a cofactor. In terms of processing, formation of the three residue Trp-Tyr-Met cross-link is important for the catalase, but not the peroxidase activity of the enzyme.

The catalysed reaction is H2O2 + AH2 = A + 2 H2O. The enzyme catalyses 2 H2O2 = O2 + 2 H2O. Bifunctional enzyme with both catalase and broad-spectrum peroxidase activity. The sequence is that of Catalase-peroxidase from Rhizobium johnstonii (strain DSM 114642 / LMG 32736 / 3841) (Rhizobium leguminosarum bv. viciae).